The following is a 110-amino-acid chain: PHD finger-like domain-containing protein 5B (110 aa).

The protein belongs to the PHF5 family.

This is PHD finger-like domain-containing protein 5B from Arabidopsis thaliana (Mouse-ear cress).